The following is a 314-amino-acid chain: Transcription factor DICHOTOMA (314 aa).

In terms of domain architecture, TCP spans 87-145 (KKDRHSKINRPQGPRDRRVRLSIGIARKFFDLQEMLGFDKPSKTLDWLLTKSKEAIKEL). Positions 201–218 (KESRAKARARARERTKEK) constitute a R domain.

The protein resides in the nucleus. Transcription regulator involved in the dorsovental asymmetry of flowers. Promotes dorsal identity. This Antirrhinum majus (Garden snapdragon) protein is Transcription factor DICHOTOMA (DICH).